The sequence spans 218 residues: ADP-sugar pyrophosphatase (218 aa).

At methionine 1 the chain carries N-acetylmethionine. Serine 10 is subject to Phosphoserine. Residue tryptophan 27 coordinates substrate. Lysine 41 is covalently cross-linked (Glycyl lysine isopeptide (Lys-Gly) (interchain with G-Cter in SUMO2)). Position 44 is a phosphothreonine (threonine 44). Residues 45–46 (WE) and arginine 83 contribute to the substrate site. The region spanning 56–196 (KSADAVSVIP…EQHLTVDAKV (141 aa)) is the Nudix hydrolase domain. Alanine 95 provides a ligand contact to Mg(2+). The Nudix box motif lies at 96-117 (GFIEDGESPEAAALRELEEETG). Residue phenylalanine 97 coordinates substrate. Mg(2+) contacts are provided by glutamate 111 and glutamate 115. A substrate-binding site is contributed by aspartate 132. Glutamate 165 contacts Mg(2+). 2 positions are modified to N6-acetyllysine: lysine 209 and lysine 217.

Belongs to the Nudix hydrolase family. In terms of assembly, homodimer. Interacts with PARG. It depends on Mg(2+) as a cofactor. In terms of processing, phosphorylation at Thr-44 is required for homodimer stability; dephosphorylation results in destabilization of the homodimer. Dephosphorylation at Thr-44 promotes the ATP-synthesis activity. As to expression, widely expressed. Most abundant in liver.

The protein resides in the nucleus. It carries out the reaction D-ribose 5-phosphate + ATP + H(+) = ADP-D-ribose + diphosphate. It catalyses the reaction ADP-D-ribose + H2O = D-ribose 5-phosphate + AMP + 2 H(+). The catalysed reaction is 8-oxo-dGDP + H2O = 8-oxo-dGMP + phosphate + H(+). Functionally, enzyme that can either act as an ADP-sugar pyrophosphatase in absence of diphosphate or catalyze the synthesis of ATP in presence of diphosphate. In absence of diphosphate, hydrolyzes with similar activities various modified nucleoside diphosphates such as ADP-ribose, ADP-mannose, ADP-glucose, 8-oxo-GDP and 8-oxo-dGDP. Can also hydrolyze other nucleotide sugars with low activity. In presence of diphosphate, mediates the synthesis of ATP in the nucleus by catalyzing the conversion of ADP-ribose to ATP and ribose 5-phosphate. Nuclear ATP synthesis takes place when dephosphorylated at Thr-44. Nuclear ATP generation is required for extensive chromatin remodeling events that are energy-consuming. Does not play a role in U8 snoRNA decapping activity. Binds U8 snoRNA. The polypeptide is ADP-sugar pyrophosphatase (Mus musculus (Mouse)).